Reading from the N-terminus, the 89-residue chain is Large ribosomal subunit protein eL31 (89 aa).

This sequence belongs to the eukaryotic ribosomal protein eL31 family.

This is Large ribosomal subunit protein eL31 from Picrophilus torridus (strain ATCC 700027 / DSM 9790 / JCM 10055 / NBRC 100828 / KAW 2/3).